Consider the following 508-residue polypeptide: Cytochrome P450 monooxygenase lepD (508 aa).

A helical transmembrane segment spans residues 22-42; sequence IAAAVAVVASIVIYLALSSFF. Residues N53 and N416 are each glycosylated (N-linked (GlcNAc...) asparagine). C454 contributes to the heme binding site.

This sequence belongs to the cytochrome P450 family. The cofactor is heme.

The protein localises to the membrane. Its function is as follows. Cytochrome P450 monooxygenase; part of the gene cluster 23 that mediates the biosynthesis of a family of 2-pyridones known as leporins. The hybrid PKS-NRPS synthetase lepA and the enoyl reductase lepG are responsible for fusion of phenylalanine with a hexaketide and subsequent release of the stable tetramic acid precursor, pre-leporin C. Because lepA lacks a designated enoylreductase (ER) domain, the required activity is provided the enoyl reductase lepG. It is possible that the dehydrogenase lepF also participates in production of pre-leporin C. Cytochrome P450 monooxygenase lepH is then required for the ring expansion step to yield leporin C. Leporin C is then presumably further oxidized by the N-hydroxylase lepD to form leporin B. LepI may possess a function in biosynthesis upstream of lepA. Leporin B is further oxidized in the presence of ferric ion to give the leporin B trimer-iron chelate, but whether or not this reaction is catalyzed by an enzyme in the pathway or by ferric ion is not determined yet. This Aspergillus flavus (strain ATCC 200026 / FGSC A1120 / IAM 13836 / NRRL 3357 / JCM 12722 / SRRC 167) protein is Cytochrome P450 monooxygenase lepD.